A 321-amino-acid chain; its full sequence is uncharacterized protein (321 aa).

Basic and acidic residues predominate over residues 1 to 12; the sequence is MQGGREVGRESV. Residues 1–85 are disordered; sequence MQGGREVGRE…GWGEFEGFQE (85 aa). Positions 53-67 are enriched in polar residues; it reads NANSSRLDEGLSSSR.

This is an uncharacterized protein from Rattus norvegicus (Rat).